The primary structure comprises 218 residues: MASLQPIKLYAHKKGPNPWKVALILEELGLPYETTYLEFPDAKVEPYISLNPNGKLPAIQDPNHSIELFESGAIIEYLIEQYDKDGKLSHESLQDKSLARAWLHLQMSAQAPVIGYKVWMGRTYDASQIVSANEFLTLEIKRVLGVLDKHLAKMGGPYLLGSKVSYADLAFVPHYMMLPLFVPDYDPATEYPHFAAWLAALKERPAVKKIAATKAALA.

Residues 5 to 86 (QPIKLYAHKK…YLIEQYDKDG (82 aa)) enclose the GST N-terminal domain. The region spanning 92–218 (SLQDKSLARA…KIAATKAALA (127 aa)) is the GST C-terminal domain.

It belongs to the GST superfamily.

The protein operates within secondary metabolite biosynthesis. Functionally, glutathione S-transferase-like protein; part of the gene cluster that mediates the biosynthesis of the bibenzoquinone oosporein, a metabolite required for fungal virulence that acts by evading host immunity to facilitate fungal multiplication in insects. The non-reducing polyketide synthase OpS1 produces orsellinic acid by condensing acetyl-CoA with 3 malonyl-CoA units. Orsellinic acid is then hydroxylated to benzenetriol by the hydroxylase OpS4. The intermediate is oxidized either nonenzymatically to 5,5'-dideoxy-oosporein or enzymatically to benzenetetrol by the oxidoreductase OpS7. The latter is further dimerized to oosporein by the catalase OpS5. OpS6 probably functions en route for protecting cells against oxidative stress by scavenging any leaked free radical form of benzenetetrol by activating the thiol group of glutathione. The protein is Glutathione S-transferase-like protein OpS6 of Beauveria bassiana (strain ARSEF 2860) (White muscardine disease fungus).